The chain runs to 331 residues: MPEAEMKEEAPEAHFTVDKQNISLWPREPPPKQDLSPVLRKPLCICVAFTCLALVLVTSIVLQAVFYPRLMGKILDVKSDAQMLKGRVDNISTLGSDLKTERGRVDDAEVQMQIVNTTLKRVRSQILSLETSMKIANDQLQILTMSWGEVDSLSAKIPELKRDLDKASALNTKVQGLQNSLENVNKLLKQQSDILEMVARGWKYFSGNFYYFSRTPKTWYSAEQFCISRKAHLTSVSSESEQKFLYKAADGIPHWIGLTKAGSEGDWYWVDQTSFNKEQSRRFWIPGEPNNAGNNEHCANIRVSALKCWNDGPCDNTFLFICKRPYVQTTE.

Residues M1–K41 lie on the Cytoplasmic side of the membrane. The helical; Signal-anchor for type II membrane protein transmembrane segment at P42 to L62 threads the bilayer. Residues Q63 to E331 are Extracellular-facing. Residues N90 and N116 are each glycosylated (N-linked (GlcNAc...) asparagine). The stretch at D106–M197 forms a coiled coil. In terms of domain architecture, C-type lectin spans F205 to K323. Intrachain disulfides connect C226-C322 and C298-C314.

Homotrimer. As to expression, expressed by Langerhans cells. Expressed in dendritic cells and by scattered cells in lymph nodes and spleen. Also detected in some non-lymphoid tissues such as lung, liver and heart.

The protein localises to the membrane. Calcium-dependent lectin displaying mannose-binding specificity. Induces the formation of Birbeck granules (BGs); is a potent regulator of membrane superimposition and zippering. Binds to sulfated as well as mannosylated glycans, keratan sulfate (KS) and beta-glucans. Facilitates uptake of antigens and is involved in the routing and/or processing of antigen for presentation to T cells. The polypeptide is C-type lectin domain family 4 member K (Cd207) (Mus musculus (Mouse)).